The sequence spans 109 residues: UPF0449 protein C19orf25 homolog (109 aa).

Tyr63 carries the phosphotyrosine modification.

This sequence belongs to the UPF0449 family.

This is UPF0449 protein C19orf25 homolog from Rattus norvegicus (Rat).